The chain runs to 511 residues: ATP synthase subunit alpha (511 aa).

169–176 (GDRQTGKT) serves as a coordination point for ATP.

This sequence belongs to the ATPase alpha/beta chains family. F-type ATPases have 2 components, CF(1) - the catalytic core - and CF(0) - the membrane proton channel. CF(1) has five subunits: alpha(3), beta(3), gamma(1), delta(1), epsilon(1). CF(0) has three main subunits: a(1), b(2) and c(9-12). The alpha and beta chains form an alternating ring which encloses part of the gamma chain. CF(1) is attached to CF(0) by a central stalk formed by the gamma and epsilon chains, while a peripheral stalk is formed by the delta and b chains.

The protein localises to the cell inner membrane. The enzyme catalyses ATP + H2O + 4 H(+)(in) = ADP + phosphate + 5 H(+)(out). Produces ATP from ADP in the presence of a proton gradient across the membrane. The alpha chain is a regulatory subunit. The sequence is that of ATP synthase subunit alpha from Bartonella tribocorum (strain CIP 105476 / IBS 506).